A 417-amino-acid chain; its full sequence is uncharacterized protein (417 aa).

A run of 10 helical transmembrane segments spans residues 21-41 (ISSL…AFQL), 50-70 (LLMM…GLLA), 88-108 (LTVI…LLSV), 166-186 (SVFY…FFLP), 217-237 (MPLL…LQIG), 255-275 (LAGW…AITG), 283-303 (LLYF…APFL), 308-328 (IAGI…FGLV), 351-371 (AIQS…GVLA), and 373-393 (WIGV…IGLI).

Belongs to the major facilitator superfamily. TCR/Tet family.

It localises to the cell membrane. This is an uncharacterized protein from Bacillus subtilis (strain 168).